A 490-amino-acid polypeptide reads, in one-letter code: ATP synthase subunit beta, chloroplastic (490 aa).

170–177 contacts ATP; sequence GGAGVGKT.

This sequence belongs to the ATPase alpha/beta chains family. F-type ATPases have 2 components, CF(1) - the catalytic core - and CF(0) - the membrane proton channel. CF(1) has five subunits: alpha(3), beta(3), gamma(1), delta(1), epsilon(1). CF(0) has four main subunits: a(1), b(1), b'(1) and c(9-12).

It is found in the plastid. The protein localises to the chloroplast thylakoid membrane. The enzyme catalyses ATP + H2O + 4 H(+)(in) = ADP + phosphate + 5 H(+)(out). Its function is as follows. Produces ATP from ADP in the presence of a proton gradient across the membrane. The catalytic sites are hosted primarily by the beta subunits. The protein is ATP synthase subunit beta, chloroplastic of Ipomoea aquatica (Water spinach).